We begin with the raw amino-acid sequence, 414 residues long: Serine hydroxymethyltransferase (414 aa).

(6S)-5,6,7,8-tetrahydrofolate-binding positions include Leu-121 and 125 to 127 (GHL). Lys-229 carries the post-translational modification N6-(pyridoxal phosphate)lysine.

This sequence belongs to the SHMT family. As to quaternary structure, homodimer. Requires pyridoxal 5'-phosphate as cofactor.

It is found in the cytoplasm. The enzyme catalyses (6R)-5,10-methylene-5,6,7,8-tetrahydrofolate + glycine + H2O = (6S)-5,6,7,8-tetrahydrofolate + L-serine. The protein operates within one-carbon metabolism; tetrahydrofolate interconversion. It functions in the pathway amino-acid biosynthesis; glycine biosynthesis; glycine from L-serine: step 1/1. Its function is as follows. Catalyzes the reversible interconversion of serine and glycine with tetrahydrofolate (THF) serving as the one-carbon carrier. This reaction serves as the major source of one-carbon groups required for the biosynthesis of purines, thymidylate, methionine, and other important biomolecules. Also exhibits THF-independent aldolase activity toward beta-hydroxyamino acids, producing glycine and aldehydes, via a retro-aldol mechanism. The protein is Serine hydroxymethyltransferase of Variovorax paradoxus (strain S110).